We begin with the raw amino-acid sequence, 227 residues long: DNA repair protein RecO (227 aa).

The protein belongs to the RecO family.

Involved in DNA repair and RecF pathway recombination. This Pseudomonas syringae pv. syringae (strain B728a) protein is DNA repair protein RecO.